A 230-amino-acid polypeptide reads, in one-letter code: Nucleoside diphosphate kinase 2, chloroplastic (230 aa).

The transit peptide at 1–64 directs the protein to the chloroplast; the sequence is MEAMAVFSGS…SYPKTFRTRS (64 aa). 6 residues coordinate ATP: K90, F138, R166, T172, R183, and N193. H196 functions as the Pros-phosphohistidine intermediate in the catalytic mechanism.

It belongs to the NDK family. Requires Mg(2+) as cofactor.

Its subcellular location is the plastid. It localises to the chloroplast. The enzyme catalyses a 2'-deoxyribonucleoside 5'-diphosphate + ATP = a 2'-deoxyribonucleoside 5'-triphosphate + ADP. The catalysed reaction is a ribonucleoside 5'-diphosphate + ATP = a ribonucleoside 5'-triphosphate + ADP. Its function is as follows. Major role in the synthesis of nucleoside triphosphates other than ATP. The ATP gamma phosphate is transferred to the NDP beta phosphate via a ping-pong mechanism, using a phosphorylated active-site intermediate. The polypeptide is Nucleoside diphosphate kinase 2, chloroplastic (NDPK2) (Pisum sativum (Garden pea)).